We begin with the raw amino-acid sequence, 331 residues long: Tyrosine recombinase XerD (331 aa).

Residues Gly-8–Tyr-93 form the Core-binding (CB) domain. A Tyr recombinase domain is found at Ala-114–Gln-318. Active-site residues include Arg-161 and Lys-185. The segment covering Gln-214–Thr-228 has biased composition (basic and acidic residues). Positions Gln-214–Ser-239 are disordered. Catalysis depends on residues His-270, Arg-273, and His-296. Tyr-305 functions as the O-(3'-phospho-DNA)-tyrosine intermediate in the catalytic mechanism.

It belongs to the 'phage' integrase family. XerD subfamily. As to quaternary structure, forms a cyclic heterotetrameric complex composed of two molecules of XerC and two molecules of XerD.

It is found in the cytoplasm. In terms of biological role, site-specific tyrosine recombinase, which acts by catalyzing the cutting and rejoining of the recombining DNA molecules. The XerC-XerD complex is essential to convert dimers of the bacterial chromosome into monomers to permit their segregation at cell division. It also contributes to the segregational stability of plasmids. This chain is Tyrosine recombinase XerD, found in Agrobacterium fabrum (strain C58 / ATCC 33970) (Agrobacterium tumefaciens (strain C58)).